Reading from the N-terminus, the 222-residue chain is Superoxide dismutase [Mn], mitochondrial (222 aa).

A mitochondrion-targeting transit peptide spans 1 to 24 (MLSRAACSTSRRLVPALSVLGSRQ). Position 50 (His-50) interacts with Mn(2+). Tyr-58 is subject to 3'-nitrotyrosine. N6-acetyllysine; alternate is present on residues Lys-68 and Lys-75. N6-succinyllysine; alternate occurs at positions 68 and 75. His-98 is a binding site for Mn(2+). Lys-122 and Lys-130 each carry N6-acetyllysine; alternate. Lys-122 and Lys-130 each carry N6-succinyllysine; alternate. Positions 183 and 187 each coordinate Mn(2+). N6-acetyllysine is present on Lys-202.

This sequence belongs to the iron/manganese superoxide dismutase family. Homotetramer. Mn(2+) is required as a cofactor. Post-translationally, nitrated under oxidative stress. Nitration coupled with oxidation inhibits the catalytic activity. Acetylation at Lys-122 decreases enzymatic activity. Deacetylated by SIRT3 upon exposure to ionizing radiations or after long fasting. In terms of processing, polyubiquitinated; leading to proteasomal degradation. Deubiquitinated by USP36 which increases protein stability.

It is found in the mitochondrion matrix. The catalysed reaction is 2 superoxide + 2 H(+) = H2O2 + O2. Destroys superoxide anion radicals which are normally produced within the cells and which are toxic to biological systems. The protein is Superoxide dismutase [Mn], mitochondrial (SOD2) of Bos taurus (Bovine).